The sequence spans 152 residues: Spermine/spermidine N(1)-acetyltransferase (152 aa).

In terms of domain architecture, N-acetyltransferase spans 3–152 (INIKAVTDDN…NGEKVMVKEL (150 aa)). Residues 82 to 84 (FFI), 89 to 95 (QGKGLGK), and 122 to 131 (NIHAIRLYQR) contribute to the acetyl-CoA site. Residue Y129 is the Proton donor of the active site.

This sequence belongs to the acetyltransferase family.

It catalyses the reaction an alkane-alpha,omega-diamine + acetyl-CoA = an N-acetylalkane-alpha,omega-diamine + CoA + H(+). The enzyme catalyses spermine + acetyl-CoA = N(1)-acetylspermine + CoA + H(+). The catalysed reaction is spermidine + acetyl-CoA = N(1)-acetylspermidine + CoA + H(+). It participates in amine and polyamine degradation; spermine degradation. Its pathway is amine and polyamine degradation; spermidine degradation. With respect to regulation, putrescine and N(8)-acetylspermidine are competitive inhibitors of spermidine acetylation. In terms of biological role, acetylates both spermidine and spermine at primary propyl amine moieties, with spermine being the preferred substrate. This is Spermine/spermidine N(1)-acetyltransferase (bltD) from Bacillus subtilis (strain 168).